Reading from the N-terminus, the 151-residue chain is 3-hydroxyacyl-[acyl-carrier-protein] dehydratase FabZ (151 aa).

Residue His54 is part of the active site.

It belongs to the thioester dehydratase family. FabZ subfamily. In terms of assembly, oligomer. In terms of processing, the N-terminus is blocked.

It localises to the cytoplasm. It catalyses the reaction a (3R)-hydroxyacyl-[ACP] = a (2E)-enoyl-[ACP] + H2O. In terms of biological role, involved in unsaturated fatty acids biosynthesis. Catalyzes the dehydration of short chain beta-hydroxyacyl-ACPs and long chain saturated and unsaturated beta-hydroxyacyl-ACPs. This chain is 3-hydroxyacyl-[acyl-carrier-protein] dehydratase FabZ, found in Escherichia coli (strain SE11).